Consider the following 130-residue polypeptide: Histone H2A type 2 (130 aa).

The segment at 1 to 22 is disordered; the sequence is MSGRGKQGGKTRAKSKTRSSRA. At serine 2 the chain carries N-acetylserine. A Phosphoserine modification is found at serine 2. The residue at position 6 (lysine 6) is an N6-(2-hydroxyisobutyryl)lysine. Lysine 6 carries the N6-acetyllysine modification. The segment covering 7–19 has biased composition (basic residues); it reads QGGKTRAKSKTRS. Lysine 10 carries the N6-(2-hydroxyisobutyryl)lysine; alternate modification. Residue lysine 10 is modified to N6-lactoyllysine; alternate. Residue lysine 10 is modified to N6-succinyllysine. Residues lysine 14 and lysine 16 each participate in a glycyl lysine isopeptide (Lys-Gly) (interchain with G-Cter in ubiquitin) cross-link. Lysine 37 bears the N6-(2-hydroxyisobutyryl)lysine; alternate mark. At lysine 76 the chain carries N6-(2-hydroxyisobutyryl)lysine. The residue at position 96 (lysine 96) is an N6-(2-hydroxyisobutyryl)lysine; alternate. N6-succinyllysine is present on lysine 96. Residue lysine 96 is modified to N6-glutaryllysine; alternate. Glutamine 105 carries the N5-methylglutamine modification. At lysine 119 the chain carries N6-(2-hydroxyisobutyryl)lysine; alternate. At lysine 119 the chain carries N6-glutaryllysine; alternate. Lysine 120 participates in a covalent cross-link: Glycyl lysine isopeptide (Lys-Gly) (interchain with G-Cter in ubiquitin).

Belongs to the histone H2A family. As to quaternary structure, the nucleosome is a histone octamer containing two molecules each of H2A, H2B, H3 and H4 assembled in one H3-H4 heterotetramer and two H2A-H2B heterodimers. The octamer wraps approximately 147 bp of DNA. In terms of processing, monoubiquitination of Lys-120 (H2AK119Ub) gives a specific tag for epigenetic transcriptional repression. Following DNA double-strand breaks (DSBs), it is ubiquitinated through 'Lys-63' linkage of ubiquitin moieties, leading to the recruitment of repair proteins to sites of DNA damage. H2AK119Ub and ionizing radiation-induced 'Lys-63'-linked ubiquitination are distinct events. Phosphorylation on Ser-2 is enhanced during mitosis. Phosphorylation on Ser-2 directly represses transcription. Post-translationally, glutamine methylation at Gln-105 (H2AQ104me) by FBL is specifically dedicated to polymerase I. It is present at 35S ribosomal DNA locus and impairs binding of the FACT complex.

The protein localises to the nucleus. It localises to the chromosome. In terms of biological role, core component of nucleosome. Nucleosomes wrap and compact DNA into chromatin, limiting DNA accessibility to the cellular machineries which require DNA as a template. Histones thereby play a central role in transcription regulation, DNA repair, DNA replication and chromosomal stability. DNA accessibility is regulated via a complex set of post-translational modifications of histones, also called histone code, and nucleosome remodeling. This Xenopus laevis (African clawed frog) protein is Histone H2A type 2.